A 344-amino-acid polypeptide reads, in one-letter code: DNA polymerase IV (344 aa).

Residues 2–183 form the UmuC domain; the sequence is IMLIDFDYFF…IKINDIPGIG (182 aa). Residues Asp6 and Asp105 each coordinate Mg(2+). Glu106 is an active-site residue.

It belongs to the DNA polymerase type-Y family. Monomer. It depends on Mg(2+) as a cofactor.

Its subcellular location is the cytoplasm. The catalysed reaction is DNA(n) + a 2'-deoxyribonucleoside 5'-triphosphate = DNA(n+1) + diphosphate. Poorly processive, error-prone DNA polymerase involved in untargeted mutagenesis. Copies undamaged DNA at stalled replication forks, which arise in vivo from mismatched or misaligned primer ends. These misaligned primers can be extended by PolIV. Exhibits no 3'-5' exonuclease (proofreading) activity. May be involved in translesional synthesis. The chain is DNA polymerase IV from Picrophilus torridus (strain ATCC 700027 / DSM 9790 / JCM 10055 / NBRC 100828 / KAW 2/3).